The sequence spans 370 residues: DNA replication and repair protein RecF (370 aa).

ATP is bound at residue 30–37; that stretch reads GENAQGKT.

Belongs to the RecF family. Recruited to foci following DNA damage; probably interacts with RecO.

It localises to the cytoplasm. Its subcellular location is the nucleoid. The RecF protein is involved in DNA metabolism; it is required for DNA replication and normal SOS inducibility. RecF binds preferentially to single-stranded, linear DNA. It also seems to bind ATP. Is recruited to repair centers, foci that are the site of double-strand DNA break(s) after RecN and RecO; recruitment may depend on RecO. A positive modulator of RecA. The protein is DNA replication and repair protein RecF of Bacillus subtilis (strain 168).